Consider the following 604-residue polypeptide: MEAIMLQKNKRNFSIIAHIDHGKSTIADRLLEYTGTVSERDMKEQILDSMDLEREKGITIKAQAVTLFYKAKNGEEYELNLIDTPGHVDFIYEVSRSLAACEGALLVVDAAQGVEAQTLANVYLAIENNLEILPIINKIDLPAAEPEKVKREIEDIIGLPADDAVLASAKNGIGIEDILEAIVHRIPAPNYDEDAPLKALIFDSYFDDYRGVITYVKVLDGNIKKGDKIKIWSTEKELEVLEAGIFSPTMKSTDILSTGSVGYIITGVKTIHDTRVGDTITSVKNPALFPLAGFKPAQSMVFAGVYPLFTDDYEELREALEKLQLNDASLTFVPETSIALGFGFRCGFLGLLHMEIIVERLRREYNIDLISTTPSVEYKVSIDNQEEKVIDNPCEFPDPGRGKITIQEPYIRGKVIVPKEYVGNVMELCQEKRGIFISMDYLDETRSMLSYELPLAEIVIDFYDKLKSRTKGYASFEYELSEYKISNLVKVDILVSGKPVDAFSFIAHNDNAFHRGKAICQKLSEVIPRQQFEIPIQAALGSKIIARETIKAYRKNVIAKCYGGDITRKKKLLEKQKEGKKRMKSIGNVEIPQEAFVSVLKLND.

Positions 8–190 (KNKRNFSIIA…AIVHRIPAPN (183 aa)) constitute a tr-type G domain. GTP is bound by residues 20 to 25 (DHGKST) and 137 to 140 (NKID).

Belongs to the TRAFAC class translation factor GTPase superfamily. Classic translation factor GTPase family. LepA subfamily.

The protein localises to the cell inner membrane. The enzyme catalyses GTP + H2O = GDP + phosphate + H(+). In terms of biological role, required for accurate and efficient protein synthesis under certain stress conditions. May act as a fidelity factor of the translation reaction, by catalyzing a one-codon backward translocation of tRNAs on improperly translocated ribosomes. Back-translocation proceeds from a post-translocation (POST) complex to a pre-translocation (PRE) complex, thus giving elongation factor G a second chance to translocate the tRNAs correctly. Binds to ribosomes in a GTP-dependent manner. This chain is Elongation factor 4, found in Fusobacterium nucleatum subsp. nucleatum (strain ATCC 25586 / DSM 15643 / BCRC 10681 / CIP 101130 / JCM 8532 / KCTC 2640 / LMG 13131 / VPI 4355).